Here is a 128-residue protein sequence, read N- to C-terminus: Small ribosomal subunit protein eS8 (128 aa).

The protein belongs to the eukaryotic ribosomal protein eS8 family. As to quaternary structure, part of the 30S ribosomal subunit.

The chain is Small ribosomal subunit protein eS8 from Methanococcus aeolicus (strain ATCC BAA-1280 / DSM 17508 / OCM 812 / Nankai-3).